The sequence spans 351 residues: Dual-specificity RNA methyltransferase RlmN (351 aa).

The active-site Proton acceptor is the glutamate 90. Residues 96–330 (EKDHYTACLS…ATLRKSKGSD (235 aa)) form the Radical SAM core domain. Cysteine 103 and cysteine 335 are oxidised to a cystine. Residues cysteine 110, cysteine 114, and cysteine 117 each coordinate [4Fe-4S] cluster. S-adenosyl-L-methionine contacts are provided by residues 162–163 (GE), serine 194, 216–218 (SLH), and asparagine 292. The active-site S-methylcysteine intermediate is cysteine 335.

Belongs to the radical SAM superfamily. RlmN family. The cofactor is [4Fe-4S] cluster.

It localises to the cytoplasm. The enzyme catalyses adenosine(2503) in 23S rRNA + 2 reduced [2Fe-2S]-[ferredoxin] + 2 S-adenosyl-L-methionine = 2-methyladenosine(2503) in 23S rRNA + 5'-deoxyadenosine + L-methionine + 2 oxidized [2Fe-2S]-[ferredoxin] + S-adenosyl-L-homocysteine. The catalysed reaction is adenosine(37) in tRNA + 2 reduced [2Fe-2S]-[ferredoxin] + 2 S-adenosyl-L-methionine = 2-methyladenosine(37) in tRNA + 5'-deoxyadenosine + L-methionine + 2 oxidized [2Fe-2S]-[ferredoxin] + S-adenosyl-L-homocysteine. Its function is as follows. Specifically methylates position 2 of adenine 2503 in 23S rRNA and position 2 of adenine 37 in tRNAs. m2A2503 modification seems to play a crucial role in the proofreading step occurring at the peptidyl transferase center and thus would serve to optimize ribosomal fidelity. This Solidesulfovibrio magneticus (strain ATCC 700980 / DSM 13731 / RS-1) (Desulfovibrio magneticus) protein is Dual-specificity RNA methyltransferase RlmN.